A 149-amino-acid polypeptide reads, in one-letter code: SsrA-binding protein (149 aa).

It belongs to the SmpB family.

It localises to the cytoplasm. In terms of biological role, required for rescue of stalled ribosomes mediated by trans-translation. Binds to transfer-messenger RNA (tmRNA), required for stable association of tmRNA with ribosomes. tmRNA and SmpB together mimic tRNA shape, replacing the anticodon stem-loop with SmpB. tmRNA is encoded by the ssrA gene; the 2 termini fold to resemble tRNA(Ala) and it encodes a 'tag peptide', a short internal open reading frame. During trans-translation Ala-aminoacylated tmRNA acts like a tRNA, entering the A-site of stalled ribosomes, displacing the stalled mRNA. The ribosome then switches to translate the ORF on the tmRNA; the nascent peptide is terminated with the 'tag peptide' encoded by the tmRNA and targeted for degradation. The ribosome is freed to recommence translation, which seems to be the essential function of trans-translation. In Anaplasma phagocytophilum (strain HZ), this protein is SsrA-binding protein.